We begin with the raw amino-acid sequence, 235 residues long: Phosphatidylserine decarboxylase proenzyme (235 aa).

The active-site Schiff-base intermediate with substrate; via pyruvic acid is the serine 204. Pyruvic acid (Ser); by autocatalysis is present on serine 204.

The protein belongs to the phosphatidylserine decarboxylase family. PSD-A subfamily. Heterodimer of a large membrane-associated beta subunit and a small pyruvoyl-containing alpha subunit. Pyruvate is required as a cofactor. In terms of processing, is synthesized initially as an inactive proenzyme. Formation of the active enzyme involves a self-maturation process in which the active site pyruvoyl group is generated from an internal serine residue via an autocatalytic post-translational modification. Two non-identical subunits are generated from the proenzyme in this reaction, and the pyruvate is formed at the N-terminus of the alpha chain, which is derived from the carboxyl end of the proenzyme. The post-translation cleavage follows an unusual pathway, termed non-hydrolytic serinolysis, in which the side chain hydroxyl group of the serine supplies its oxygen atom to form the C-terminus of the beta chain, while the remainder of the serine residue undergoes an oxidative deamination to produce ammonia and the pyruvoyl prosthetic group on the alpha chain.

The protein resides in the cell membrane. The catalysed reaction is a 1,2-diacyl-sn-glycero-3-phospho-L-serine + H(+) = a 1,2-diacyl-sn-glycero-3-phosphoethanolamine + CO2. It functions in the pathway phospholipid metabolism; phosphatidylethanolamine biosynthesis; phosphatidylethanolamine from CDP-diacylglycerol: step 2/2. Catalyzes the formation of phosphatidylethanolamine (PtdEtn) from phosphatidylserine (PtdSer). The sequence is that of Phosphatidylserine decarboxylase proenzyme from Mycobacterium sp. (strain KMS).